The chain runs to 423 residues: Maltoporin 1 (423 aa).

The N-terminal stretch at M1–A24 is a signal peptide.

It belongs to the porin LamB (TC 1.B.3) family. In terms of assembly, homotrimer formed of three 18-stranded antiparallel beta-barrels, containing three independent channels.

Its subcellular location is the cell outer membrane. It carries out the reaction beta-maltose(in) = beta-maltose(out). Involved in the transport of maltose and maltodextrins. The polypeptide is Maltoporin 1 (Yersinia pestis bv. Antiqua (strain Antiqua)).